We begin with the raw amino-acid sequence, 322 residues long: Chemokine XC receptor 1 (322 aa).

Residues 1 to 27 (MESSTAFYDYHDKLSLLCENNVIFFST) are Extracellular-facing. A helical membrane pass occupies residues 28–55 (ISTIVLYSLVFLLSLVGNSLVLWVLVKY). Over 56-65 (ENLESLTNIF) the chain is Cytoplasmic. Residues 66-85 (ILNLCLSDLMFSCLLPVLIS) traverse the membrane as a helical segment. Topologically, residues 86-98 (AQWSWFLGDFFCK) are extracellular. Cysteines 97 and 170 form a disulfide. The chain crosses the membrane as a helical span at residues 99 to 120 (FFNMIFGISLYSSIFFLTIMTI). The Cytoplasmic portion of the chain corresponds to 121–137 (HRYLSVVSPISTLGIHT). A helical transmembrane segment spans residues 138-162 (LRCRVLVTSCVWAASILFSIPDAVF). Topologically, residues 163–185 (HKVISLNCKYSEHHGFLASVYQH) are extracellular. Residues 186–204 (NIFFLLSMGIILFCYVQIL) traverse the membrane as a helical segment. Over 205–220 (RTLFRTRSRQRHRTVR) the chain is Cytoplasmic. A helical membrane pass occupies residues 221–243 (LIFTVVVAYFLSWAPYNLTLFLK). Over 244 to 259 (TGIIQQSCESLQQLDI) the chain is Extracellular. Residues 260–283 (AMIICRHLAFSHCCFNPVLYVFVG) traverse the membrane as a helical segment. Residues 284 to 322 (IKFRRHLKHLFQQVWLCRKTSSTVPCSPGTFTYEGPSFY) lie on the Cytoplasmic side of the membrane.

This sequence belongs to the G-protein coupled receptor 1 family. In terms of tissue distribution, expressed by dendritic cells from the thymus, slpeen, subcutaneous lymph nodes and mesenteric lymph nodes.

Its subcellular location is the cell membrane. Its function is as follows. Receptor for chemokines SCYC1 and SCYC2. Subsequently transduces a signal by increasing the intracellular calcium ions level. Receptor for XCL1/Lymphotactin. This Mus musculus (Mouse) protein is Chemokine XC receptor 1 (Xcr1).